The sequence spans 86 residues: Small ribosomal subunit protein bS16 (86 aa).

This sequence belongs to the bacterial ribosomal protein bS16 family.

The chain is Small ribosomal subunit protein bS16 from Trichormus variabilis (strain ATCC 29413 / PCC 7937) (Anabaena variabilis).